The following is a 387-amino-acid chain: Protein PHYTOCHROME KINASE SUBSTRATE 3 (387 aa).

Disordered stretches follow at residues 1–21, 74–128, and 242–271; these read MDAE…PQLL, HEKE…CNSQ, and LSTK…ASVA. A compositionally biased stretch (polar residues) spans 12-21; the sequence is QISSYKPQLL. Residues 74-83 show a composition bias toward basic and acidic residues; it reads HEKENTHDHP. Residues 114-128 are compositionally biased toward polar residues; it reads HGTPSVRSESSCNSQ. Residues 242-261 show a composition bias toward low complexity; sequence LSTKNNNHNNNGNNSSMSSN.

This sequence belongs to the PKS family.

In terms of biological role, probably involved in the phytochrome signaling pathway. The chain is Protein PHYTOCHROME KINASE SUBSTRATE 3 (PKS3) from Arabidopsis thaliana (Mouse-ear cress).